The primary structure comprises 253 residues: Putative ankyrin repeat protein NMB1133/NMB1171 (253 aa).

2 ANK repeats span residues 196–225 (DGYT…NPAS) and 229–252 (EGYT…LEPR).

In Neisseria meningitidis serogroup B (strain ATCC BAA-335 / MC58), this protein is Putative ankyrin repeat protein NMB1133/NMB1171.